The chain runs to 471 residues: Putative multidrug resistance protein MdtD (471 aa).

Topologically, residues 1 to 11 (MTDLPDSTRWQ) are periplasmic. A helical transmembrane segment spans residues 12 to 32 (LWIVAFGFFMQSLDTTIVNTA). The Cytoplasmic segment spans residues 33–48 (LPSMAQSLGESPLHMH). Residues 49–69 (MVIVSYVLTVAVMLPASGWLA) traverse the membrane as a helical segment. Topologically, residues 70–76 (DKVGVRN) are periplasmic. Residues 77-97 (IFFTAIVLFTLGSLFCALSGT) form a helical membrane-spanning segment. Over 98–101 (LNEL) the chain is Cytoplasmic. A helical transmembrane segment spans residues 102 to 124 (LLARALQGVGGAMMVPVGRLTVM). Over 125 to 137 (KIVPREQYMAAMT) the chain is Periplasmic. A helical transmembrane segment spans residues 138-158 (FVTLPGQVGPLLGPALGGLLV). At 159–164 (EYASWH) the chain is on the cytoplasmic side. Residues 165–185 (WIFLINIPVGIIGAIATLMLM) form a helical membrane-spanning segment. At 186 to 196 (PNYTMQTRRFD) the chain is on the periplasmic side. The chain crosses the membrane as a helical span at residues 197 to 217 (LSGFLLLAVGMAVLTLALDGS). At 218 to 224 (KGTGLSP) the chain is on the cytoplasmic side. Residues 225-245 (LAIAGLVAVGVVALVLYLLHA) form a helical membrane-spanning segment. Residues 246-262 (RNNNRALFSLKLFRTRT) lie on the Periplasmic side of the membrane. Residues 263–283 (FSLGLAGSFAGRIGSGMLPFM) form a helical membrane-spanning segment. The Cytoplasmic segment spans residues 284 to 285 (TP). Residues 286-306 (VFLQIGLGFSPFHAGLMMIPM) traverse the membrane as a helical segment. Residues 307-341 (VLGSMGMKRIVVQVVNRFGYRRVLVATTLGLSLVT) lie on the Periplasmic side of the membrane. Residues 342 to 362 (LLFMTTALLGWYYVLPFVLFL) form a helical membrane-spanning segment. Over 363–395 (QGMVNSTRFSSMNTLTLKDLPDNLASSGNSLLS) the chain is Cytoplasmic. Residues 396-416 (MIMQLSMSIGVTIAGLLLGLF) form a helical membrane-spanning segment. The Periplasmic segment spans residues 417-430 (GSQHISVDSGTTQT). A helical transmembrane segment spans residues 431–451 (VFMYTWLSMAFIIALPAFIFA). The Cytoplasmic segment spans residues 452–471 (RVPNDTHQNVAISRRKRSAQ).

Belongs to the major facilitator superfamily. TCR/Tet family.

The protein localises to the cell inner membrane. The polypeptide is Putative multidrug resistance protein MdtD (Shigella flexneri).